A 692-amino-acid polypeptide reads, in one-letter code: DNA ligase (692 aa).

NAD(+) contacts are provided by residues 40–44 (DAAYD), 89–90 (SL), and Glu121. Catalysis depends on Lys123, which acts as the N6-AMP-lysine intermediate. Residues Arg144, Glu181, Lys297, and Lys321 each coordinate NAD(+). The Zn(2+) site is built by Cys415, Cys417, Cys439, and Cys445. The region spanning 614 to 692 (KTDTAVAGKT…EDEWLEMVGS (79 aa)) is the BRCT domain.

This sequence belongs to the NAD-dependent DNA ligase family. LigA subfamily. Mg(2+) is required as a cofactor. The cofactor is Mn(2+).

It catalyses the reaction NAD(+) + (deoxyribonucleotide)n-3'-hydroxyl + 5'-phospho-(deoxyribonucleotide)m = (deoxyribonucleotide)n+m + AMP + beta-nicotinamide D-nucleotide.. In terms of biological role, DNA ligase that catalyzes the formation of phosphodiester linkages between 5'-phosphoryl and 3'-hydroxyl groups in double-stranded DNA using NAD as a coenzyme and as the energy source for the reaction. It is essential for DNA replication and repair of damaged DNA. The sequence is that of DNA ligase from Phenylobacterium zucineum (strain HLK1).